The following is a 299-amino-acid chain: tRNA-cytidine(32) 2-sulfurtransferase (299 aa).

The short motif at 56–61 (SGGKDS) is the PP-loop motif element. The [4Fe-4S] cluster site is built by Cys-131, Cys-134, and Cys-222.

It belongs to the TtcA family. As to quaternary structure, homodimer. Requires Mg(2+) as cofactor. The cofactor is [4Fe-4S] cluster.

It is found in the cytoplasm. The enzyme catalyses cytidine(32) in tRNA + S-sulfanyl-L-cysteinyl-[cysteine desulfurase] + AH2 + ATP = 2-thiocytidine(32) in tRNA + L-cysteinyl-[cysteine desulfurase] + A + AMP + diphosphate + H(+). The protein operates within tRNA modification. Functionally, catalyzes the ATP-dependent 2-thiolation of cytidine in position 32 of tRNA, to form 2-thiocytidine (s(2)C32). The sulfur atoms are provided by the cysteine/cysteine desulfurase (IscS) system. The polypeptide is tRNA-cytidine(32) 2-sulfurtransferase (Xylella fastidiosa (strain 9a5c)).